A 310-amino-acid polypeptide reads, in one-letter code: p-hydroxybenzoic acid efflux pump subunit AaeA (310 aa).

The chain crosses the membrane as a helical span at residues 12 to 32 (AITVVLVVLAFIAIFRAWSFY).

The protein belongs to the membrane fusion protein (MFP) (TC 8.A.1) family.

The protein localises to the cell inner membrane. Forms an efflux pump with AaeB. The chain is p-hydroxybenzoic acid efflux pump subunit AaeA from Cronobacter sakazakii (strain ATCC BAA-894) (Enterobacter sakazakii).